Consider the following 43-residue polypeptide: Protein PsbN (43 aa).

A helical membrane pass occupies residues 7–29 (ITIFLSGLLVSFTGYALYTAFGQ).

It belongs to the PsbN family.

The protein localises to the plastid membrane. May play a role in photosystem I and II biogenesis. The chain is Protein PsbN from Cuscuta reflexa (Southern Asian dodder).